The following is a 141-amino-acid chain: Lutropin subunit beta (141 aa).

The signal sequence occupies residues 1-20 (MERLQGLLLWLLLSPSVVWA). 5 disulfide bridges follow: Cys-29-Cys-77, Cys-43-Cys-92, Cys-54-Cys-108, Cys-58-Cys-110, and Cys-113-Cys-120. Asn-33 is a glycosylation site (N-linked (GlcNAc...) asparagine).

Belongs to the glycoprotein hormones subunit beta family. Heterodimer of a common alpha chain and a unique beta chain which confers biological specificity to thyrotropin, lutropin, follitropin and gonadotropin.

It is found in the secreted. Functionally, promotes spermatogenesis and ovulation by stimulating the testes and ovaries to synthesize steroids. The protein is Lutropin subunit beta (Lhb) of Mus musculus (Mouse).